Consider the following 360-residue polypeptide: uncharacterized protein (360 aa).

The next 7 helical transmembrane spans lie at 26–48, 58–80, 89–111, 126–148, 169–191, 195–214, and 227–249; these read SVCY…SGAT, LHPL…ASVL, VMGL…NIAH, LSTG…SILA, RLAY…PTAL, IPSV…YALL, and CALC…SHMV.

The protein localises to the cell membrane. This is an uncharacterized protein from Treponema pallidum (strain Nichols).